We begin with the raw amino-acid sequence, 643 residues long: Phosphomethylpyrimidine synthase (643 aa).

Substrate contacts are provided by residues N221, M250, Y279, H315, 335-337, 376-379, and E415; these read SRG and DGLR. H419 is a Zn(2+) binding site. Y442 provides a ligand contact to substrate. Zn(2+) is bound at residue H483. The [4Fe-4S] cluster site is built by C563, C566, and C571.

The protein belongs to the ThiC family. In terms of assembly, homodimer. [4Fe-4S] cluster is required as a cofactor.

The catalysed reaction is 5-amino-1-(5-phospho-beta-D-ribosyl)imidazole + S-adenosyl-L-methionine = 4-amino-2-methyl-5-(phosphooxymethyl)pyrimidine + CO + 5'-deoxyadenosine + formate + L-methionine + 3 H(+). It participates in cofactor biosynthesis; thiamine diphosphate biosynthesis. Its function is as follows. Catalyzes the synthesis of the hydroxymethylpyrimidine phosphate (HMP-P) moiety of thiamine from aminoimidazole ribotide (AIR) in a radical S-adenosyl-L-methionine (SAM)-dependent reaction. The protein is Phosphomethylpyrimidine synthase of Nitrobacter hamburgensis (strain DSM 10229 / NCIMB 13809 / X14).